The chain runs to 402 residues: Putative FBD-associated F-box protein At5g56690 (402 aa).

Residues 1 to 47 (MAEISGLPDDLLVKILAFLPTKVAISTSVLSKQWRFLWMWLPKLKYD) form the F-box domain. The FBD domain occupies 349–401 (SWSKNQGSVPKCFLNSLETFRVKWYYSEEQEDRDFLSLIFKHARCLKSTSILH).

The chain is Putative FBD-associated F-box protein At5g56690 from Arabidopsis thaliana (Mouse-ear cress).